Reading from the N-terminus, the 391-residue chain is Pepsin B (391 aa).

An N-terminal signal peptide occupies residues 1-16; it reads MKCLILALICLQLSEG. The propeptide at 17–60 is activation peptide; it reads LVVRQILHKGKSIRERMEENGVLEDFLRYNKKADPAAKFLFNKD. The Peptidase A1 domain maps to 75–388; it reads YFGEISIGTP…DMANNRVGFA (314 aa). D93 is a catalytic residue. Disulfide bonds link C106-C111 and C270-C274. Residue D279 is part of the active site. The cysteines at positions 313 and 346 are disulfide-linked.

It belongs to the peptidase A1 family.

It localises to the secreted. The enzyme catalyses Degradation of gelatin, little activity on hemoglobin. Specificity on B chain of insulin more restricted than that of pepsin A. Does not cleave 1-Phe-|-Val-2, 4-Gln-|-His-5 or 23-Gly-|-Phe-24.. Its function is as follows. Hydrolyzes various peptides including beta-endorphin, insulin B chain, dynorphin A, and neurokinin A, with high specificity for the cleavage of the Phe-Xaa bonds. The protein is Pepsin B of Monodelphis domestica (Gray short-tailed opossum).